We begin with the raw amino-acid sequence, 897 residues long: Macoilin (897 aa).

Transmembrane regions (helical) follow at residues 113-133, 157-177, 181-201, and 204-224; these read ICYL…YVWI, QSWP…FLRI, PILI…PVWP, and LNAF…TVSM. Polar residues-rich tracts occupy residues 291 to 304 and 329 to 338; these read IQAA…SSKK and GNSGFNSTPP. Residues 291-375 are disordered; that stretch reads IQAASATPPT…DTSSSTIEDQ (85 aa). Positions 351 to 361 are enriched in acidic residues; it reads DMDDGDDSDDD. The chain crosses the membrane as a helical span at residues 379 to 399; sequence GGISIIRFIFSSAAWLFSFVF. Positions 403 to 413 are enriched in polar residues; it reads TPSENSLSNQQ. Disordered stretches follow at residues 403-535 and 724-770; these read TPSE…QEED and NGSS…SPVP. Over residues 414–424 the composition is skewed to acidic residues; it reads IDDDEDYEDGD. The segment covering 432–451 has biased composition (polar residues); it reads TDSMTSTTKGRANTMPSTTR. Low complexity-rich tracts occupy residues 452–467 and 475–490; these read SQNN…QSNG and SHQN…SNGH. The stretch at 503–726 forms a coiled coil; that stretch reads DTNASNETDI…VQEFQIKNGS (224 aa). A compositionally biased stretch (basic and acidic residues) spans 510–535; the sequence is TDIRSMSRELESLRSEISSRRSQEED. Over residues 734–761 the composition is skewed to polar residues; sequence ETLMNGRSSTEANNENDTTASDQSSPHQ.

As to expression, strong expression in many neurons, very weak expression is also detected in others tissues.

It is found in the rough endoplasmic reticulum membrane. It localises to the nucleus membrane. Functionally, plays a role in the regulation of neuronal activity. In AWA and AWC neurons, plays a role in regulating olfactory adaptation by controlling the forgetting sensory responses to odorants such as diacetyl and isoamyl alcohol. May play a role in regulating daf-7 expression in ASI neurons in response to bacterial small RNAs. In ASI neurons, promotes dauer formation in response to pheromones such as the ascarosides ascr#2 and ascr#3. The protein is Macoilin of Caenorhabditis elegans.